A 480-amino-acid polypeptide reads, in one-letter code: Major facilitator superfamily domain-containing protein 12 (480 aa).

M1 carries the post-translational modification N-acetylmethionine. Over 1-26 (MGPGPPAAGAAPSPRPLSLVARLSYA) the chain is Cytoplasmic. Residues 27–47 (VGHFLNDLCASMWFTYLLLYL) form a helical membrane-spanning segment. Over 48-56 (HSVRAYSSR) the chain is Lumenal. A helical transmembrane segment spans residues 57-77 (GAGLLLLLGQVADGLCTPLVG). The Cytoplasmic segment spans residues 78 to 97 (YEADRAASCCARYGPRKAWH). A helical membrane pass occupies residues 98-118 (LVGTVCVLLSFPFIFSPCLGC). The Lumenal segment spans residues 119-124 (GAATPE). Residues 125 to 145 (WAALLYYGPFIVIFQFGWAST) traverse the membrane as a helical segment. The Cytoplasmic portion of the chain corresponds to 146-170 (QISHLSLIPELVTNDHEKVELTALR). A helical transmembrane segment spans residues 171–191 (YAFTVVANITVYGAAWLLLHL). Over 192–218 (QGSSRVEPTQDISISDQLGGQDVPVFR) the chain is Lumenal. A helical transmembrane segment spans residues 219–239 (NLSLLVVGVGAVFSLLFHLGT). Over 240 to 279 (RERRRPHAEEPGEHTPLLAPATAQPLLLWKHWLREPAFYQ) the chain is Cytoplasmic. T254 carries the post-translational modification Phosphothreonine; by MTOR. A helical membrane pass occupies residues 280 to 302 (VGILYMTTRLIVNLSQTYMAMYL). Residues 303–310 (TYSLHLPK) lie on the Lumenal side of the membrane. The chain crosses the membrane as a helical span at residues 311-331 (KFIATIPLVMYLSGFLSSFLM). Residues 332–347 (KPINKCIGRNMTYFSG) are Cytoplasmic-facing. The next 2 helical transmembrane spans lie at 348–368 (LLVI…GVAV) and 369–389 (YAAA…SLAM). Residues 390 to 402 (TADLIGPHTNSGA) lie on the Cytoplasmic side of the membrane. Residues 403–423 (FVYGSMSFLDKVANGLAVMAI) form a helical membrane-spanning segment. Topologically, residues 424–446 (QSLHPCPSELCCRACVSFYHWAM) are lumenal. The helical transmembrane segment at 447–467 (VAVTGGVGVAAALCLCSLLLW) threads the bilayer. At 468 to 480 (PTRLRRWDRDARP) the chain is on the cytoplasmic side.

This sequence belongs to the major facilitator superfamily. In terms of processing, phosphorylation at Thr-254 by MTOR via mTORC1 pathway promotes cysteine transport in lysosomes, thereby regulating lysosomal cysteine and cystine storage and redox homeostasis. Widely expressed, with high expression in primary melanocytes.

Its subcellular location is the melanosome membrane. It localises to the lysosome membrane. The enzyme catalyses L-cysteine(in) = L-cysteine(out). In terms of biological role, transporter that mediates the import of cysteine into melanosomes, thereby regulating skin pigmentation. In melanosomes, cysteine import is required both for normal levels of cystine, the oxidized dimer of cysteine, and provide cysteine for the production of the cysteinyldopas used in pheomelanin synthesis, thereby regulating skin pigmentation. Also catalyzes import of cysteine into lysosomes in non-pigmented cells, regulating lysosomal cystine and cysteine storage, which is essnetial for redox homeostasis. This Homo sapiens (Human) protein is Major facilitator superfamily domain-containing protein 12.